The following is a 331-amino-acid chain: Putative ankyrin repeat protein RBE_0261 (331 aa).

An ANK repeat occupies glutamine 94–valine 159.

The protein is Putative ankyrin repeat protein RBE_0261 of Rickettsia bellii (strain RML369-C).